We begin with the raw amino-acid sequence, 378 residues long: Uroporphyrinogen decarboxylase (378 aa).

Substrate is bound by residues 40 to 44 (RQAGR), aspartate 90, tyrosine 167, serine 222, and histidine 355.

Belongs to the uroporphyrinogen decarboxylase family. In terms of assembly, homodimer.

The protein localises to the cytoplasm. It catalyses the reaction uroporphyrinogen III + 4 H(+) = coproporphyrinogen III + 4 CO2. The protein operates within porphyrin-containing compound metabolism; protoporphyrin-IX biosynthesis; coproporphyrinogen-III from 5-aminolevulinate: step 4/4. Functionally, catalyzes the decarboxylation of four acetate groups of uroporphyrinogen-III to yield coproporphyrinogen-III. The sequence is that of Uroporphyrinogen decarboxylase from Psychrobacter cryohalolentis (strain ATCC BAA-1226 / DSM 17306 / VKM B-2378 / K5).